The primary structure comprises 398 residues: Enoyl-[acyl-carrier-protein] reductase [NADH] (398 aa).

NAD(+) is bound by residues Gly-48–Tyr-53, Phe-74–Glu-75, Asp-111–Ala-112, and Leu-139–Ala-140. Tyr-225 is a substrate binding site. The Proton donor role is filled by Tyr-235. NAD(+) contacts are provided by residues Lys-244 and Val-273–Thr-275.

This sequence belongs to the TER reductase family. In terms of assembly, monomer.

The catalysed reaction is a 2,3-saturated acyl-[ACP] + NAD(+) = a (2E)-enoyl-[ACP] + NADH + H(+). The protein operates within lipid metabolism; fatty acid biosynthesis. Its function is as follows. Involved in the final reduction of the elongation cycle of fatty acid synthesis (FAS II). Catalyzes the reduction of a carbon-carbon double bond in an enoyl moiety that is covalently linked to an acyl carrier protein (ACP). This is Enoyl-[acyl-carrier-protein] reductase [NADH] from Pseudomonas paraeruginosa (strain DSM 24068 / PA7) (Pseudomonas aeruginosa (strain PA7)).